Here is a 629-residue protein sequence, read N- to C-terminus: tRNA uridine 5-carboxymethylaminomethyl modification enzyme MnmG (629 aa).

13 to 18 (GGGHAG) contacts FAD. 273–287 (GPRYCPSIEDKIVRF) provides a ligand contact to NAD(+).

It belongs to the MnmG family. As to quaternary structure, homodimer. Heterotetramer of two MnmE and two MnmG subunits. FAD serves as cofactor.

Its subcellular location is the cytoplasm. In terms of biological role, NAD-binding protein involved in the addition of a carboxymethylaminomethyl (cmnm) group at the wobble position (U34) of certain tRNAs, forming tRNA-cmnm(5)s(2)U34. The protein is tRNA uridine 5-carboxymethylaminomethyl modification enzyme MnmG of Marinomonas sp. (strain MWYL1).